Consider the following 349-residue polypeptide: GDSL esterase/lipase At2g19060 (349 aa).

The N-terminal stretch at 1 to 25 is a signal peptide; that stretch reads MADKMFKALLWAFATAVVMAEAVRG. Ser37 acts as the Nucleophile in catalysis. The N-linked (GlcNAc...) asparagine glycan is linked to Asn178. Residues Asp317 and His320 contribute to the active site.

This sequence belongs to the 'GDSL' lipolytic enzyme family.

Its subcellular location is the secreted. The chain is GDSL esterase/lipase At2g19060 from Arabidopsis thaliana (Mouse-ear cress).